Reading from the N-terminus, the 1930-residue chain is Ankyrin repeat domain-containing protein SAT10 (1930 aa).

ANK repeat units lie at residues 840-872 (FRHTPLGVATAYGDADVIDLLINHDISWWDLEE), 878-908 (GTWNALHHAALGGQRNIMCKLLLQQRKGVLN), 920-949 (SGNTPLILAASRGFHKIVALLLEDGSMRGY), 959-989 (QRSSALLAAARYGFSQTLEMLLTYEGIDYSK), 993-1023 (NGASILHLALVNDREAAALQILAHKDIFSNE), 1073-1102 (SGLTSLTIAIWRNLKSIVEILIAMDADANG), 1106-1135 (EFEAPLVAAAEVGSFELFTMFTKIGATKTE), 1144-1174 (GRTRPLHAACAMGHLEVVRELLKDSVTQLSH), 1178-1205 (NQRTPLCAAISRDQNHVISVLLDRETET), 1206-1235 (GLQEGLWEAARSGKAHILDQLLRRGAEINA), 1239-1268 (YGNTALQWASYYNKPRCVERLLLGGARLDL), 1272-1301 (DNVNALGDAARSGSAEPLKLLVDVGVDVNA), 1304-1333 (GGDTALCRAIWAEEVECVSVLLQGGAKFIL), 1339-1368 (RFENLLTFAVQVSSPEILRLLLKAPEERDL), 1400-1429 (SGWTILHLAAVHGTLAGLTKVLDHATGRAA), 1514-1543 (QNMLASAWMDTERSLKLLGILLEAGVSLTP), 1548-1577 (RHGTALHTAALFSPKPLVEKVIETSRMLAD), 1615-1644 (MGRNAVHLAAAAGARSVLEKIFEVEENEDL), 1651-1680 (DGWTPFHWACRGEDDDCARFLIEKARKIFD), and 1696-1724 (KTWTPLDVARFHQRREVELLLSLGMTTSD).

It participates in mycotoxin biosynthesis. In terms of biological role, ankyrin repeat domain-containing protein; part of the satratoxin SC1 cluster involved in the biosynthesis of satratoxins, trichothecene mycotoxins that are associated with human food poisonings. Satratoxins are suggested to be made by products of multiple gene clusters (SC1, SC2 and SC3) that encode 21 proteins in all, including polyketide synthases, acetyltransferases, and other enzymes expected to modify the trichothecene skeleton. SC1 encodes 10 proteins, SAT1 to SAT10. The largest are SAT8, which encodes a putative polyketide synthase (PKS) with a conventional non-reducing architecture, and SAT10, a putative protein containing four ankyrin repeats and thus may be involved in protein scaffolding. The putative short-chain reductase SAT3 may assist the PKS in some capacity. SAT6 contains a secretory lipase domain and acts probably as a trichothecene esterase. SAT5 encodes a putative acetyltransferase, and so, with SAT6, may affect endogenous protection from toxicity. The probable transcription factor SAT9 may regulate the expression of the SC1 cluster. SC2 encodes proteins SAT11 to SAT16, the largest of which encodes the putative reducing PKS SAT13. SAT11 is a cytochrome P450 monooxygenase, while SAT14 and SAT16 are probable acetyltransferases. The SC2 cluster may be regulated by the transcription factor SAT15. SC3 is a small cluster that encodes 5 proteins, SAT17 to SAT21. SAT21 is a putative MFS-type transporter which may have a role in exporting secondary metabolites. The four other proteins putatively encoded in SC3 include the taurine hydroxylase-like protein SAT17, the O-methyltransferase SAT18, the acetyltransferase SAT19, and the Cys6-type zinc finger SAT20, the latter being probably involved in regulation of SC3 expression. This is Ankyrin repeat domain-containing protein SAT10 from Stachybotrys chartarum (strain CBS 109288 / IBT 7711) (Toxic black mold).